A 334-amino-acid polypeptide reads, in one-letter code: N-chimaerin (334 aa).

Polar residues predominate over residues 1–10 (MPSKESWSGR). The tract at residues 1 to 22 (MPSKESWSGRKTNRATVHKSKQ) is disordered. The residue at position 67 (T67) is a Phosphothreonine. Residues 80–130 (VHNFKVHTFRGPHWCEYCANFMWGLIAQGVKCADCGLNVHKQCSKMVPNDC) form a Phorbol-ester/DAG-type zinc finger. In terms of domain architecture, Rho-GAP spans 143-334 (CDLTTLVKAH…LLIKNEDILF (192 aa)). The residue at position 215 (T215) is a Phosphothreonine.

In terms of assembly, interacts with EPHA4; effector of EPHA4 in axon guidance linking EPHA4 activation to RAC1 regulation. Post-translationally, phosphorylated. Phosphorylation is EPHA4 kinase activity-dependent. In neurons in brain regions that are involved in learning and memory processes.

In terms of biological role, GTPase-activating protein for p21-rac and a phorbol ester receptor. Involved in the assembly of neuronal locomotor circuits as a direct effector of EPHA4 in axon guidance. The polypeptide is N-chimaerin (Chn1) (Rattus norvegicus (Rat)).